The sequence spans 260 residues: 3'-5' ssDNA/RNA exonuclease TatD (260 aa).

Positions 92, 128, and 153 each coordinate a divalent metal cation.

It belongs to the metallo-dependent hydrolases superfamily. TatD-type hydrolase family. TatD subfamily. Monomer. Mg(2+) is required as a cofactor.

The protein localises to the cytoplasm. Its function is as follows. 3'-5' exonuclease that prefers single-stranded DNA and RNA. May play a role in the H(2)O(2)-induced DNA damage repair. The chain is 3'-5' ssDNA/RNA exonuclease TatD from Pantoea vagans (strain C9-1) (Pantoea agglomerans (strain C9-1)).